A 249-amino-acid polypeptide reads, in one-letter code: 2,3-bisphosphoglycerate-dependent phosphoglycerate mutase (249 aa).

Substrate-binding positions include 8–15 (RHGQSVWN), 21–22 (TG), R60, 87–90 (ERHY), K98, 114–115 (RR), and 183–184 (GN). H9 serves as the catalytic Tele-phosphohistidine intermediate. E87 (proton donor/acceptor) is an active-site residue.

This sequence belongs to the phosphoglycerate mutase family. BPG-dependent PGAM subfamily. In terms of assembly, homodimer.

The enzyme catalyses (2R)-2-phosphoglycerate = (2R)-3-phosphoglycerate. It functions in the pathway carbohydrate degradation; glycolysis; pyruvate from D-glyceraldehyde 3-phosphate: step 3/5. In terms of biological role, catalyzes the interconversion of 2-phosphoglycerate and 3-phosphoglycerate. The protein is 2,3-bisphosphoglycerate-dependent phosphoglycerate mutase of Solidesulfovibrio magneticus (strain ATCC 700980 / DSM 13731 / RS-1) (Desulfovibrio magneticus).